A 301-amino-acid chain; its full sequence is Protoheme IX farnesyltransferase (301 aa).

The next 9 membrane-spanning stretches (helical) occupy residues 29–49 (VVAL…PGVV), 51–71 (IVPL…AAAF), 96–118 (VSIA…VLYV), 123–143 (LTAW…TAYL), 151–171 (IVVG…AVTG), 177–197 (ALLL…ALAI), 223–243 (CIFL…LVGM), 244–264 (CGPV…YKAW), and 281–301 (FSIY…YLWL).

Belongs to the UbiA prenyltransferase family. Protoheme IX farnesyltransferase subfamily.

It is found in the cell inner membrane. The enzyme catalyses heme b + (2E,6E)-farnesyl diphosphate + H2O = Fe(II)-heme o + diphosphate. Its pathway is porphyrin-containing compound metabolism; heme O biosynthesis; heme O from protoheme: step 1/1. Converts heme B (protoheme IX) to heme O by substitution of the vinyl group on carbon 2 of heme B porphyrin ring with a hydroxyethyl farnesyl side group. This Shewanella halifaxensis (strain HAW-EB4) protein is Protoheme IX farnesyltransferase.